The primary structure comprises 242 residues: Putative pyrimidine-specific ribonucleoside hydrolase RihB (242 aa).

Gln-156 and His-168 together coordinate substrate.

It belongs to the IUNH family. RihB subfamily.

The enzyme catalyses a pyrimidine ribonucleoside + H2O = a pyrimidine nucleobase + D-ribose. This is Putative pyrimidine-specific ribonucleoside hydrolase RihB (rihB) from Shigella boydii serotype 4 (strain Sb227).